Reading from the N-terminus, the 108-residue chain is Replication initiation control protein YabA (108 aa).

Zn(2+) is bound by residues H82, C84, C98, and C101.

The protein belongs to the YabA family. Homotetramer. Interacts with both DnaA and DnaN, acting as a bridge between these two proteins. Requires Zn(2+) as cofactor.

The protein localises to the cytoplasm. It is found in the nucleoid. Involved in control of chromosome replication initiation. Inhibits the cooperative binding of DnaA to the oriC region, thus negatively regulating initiation of chromosome replication. Inhibits the ability of DnaA-ATP to form a helix on DNA; does not disassemble preformed DnaA-DNA helices. Decreases the residence time of DnaA on the chromosome at its binding sites (oriC, replication forks and promoter-binding sites). Tethers DnaA to the replication machinery via the DNA polymerase beta sliding clamp subunit (dnaN). Associates with oriC and other DnaA targets on the chromosome in a DnaA-dependent manner. This Streptococcus agalactiae serotype Ia (strain ATCC 27591 / A909 / CDC SS700) protein is Replication initiation control protein YabA.